Reading from the N-terminus, the 131-residue chain is Sec-independent protein translocase protein TatB (131 aa).

The helical transmembrane segment at 1 to 21 (MFDISFAELVVVGIVALIVIG) threads the bilayer. Composition is skewed to polar residues over residues 71–93 (NSFENSVRSEINKIQETTETQSA) and 111–131 (PVNTSETKTSSAPAEPRQPNS). Residues 71–131 (NSFENSVRSE…APAEPRQPNS (61 aa)) are disordered.

This sequence belongs to the TatB family. The Tat system comprises two distinct complexes: a TatABC complex, containing multiple copies of TatA, TatB and TatC subunits, and a separate TatA complex, containing only TatA subunits. Substrates initially bind to the TatABC complex, which probably triggers association of the separate TatA complex to form the active translocon.

The protein resides in the cell inner membrane. Its function is as follows. Part of the twin-arginine translocation (Tat) system that transports large folded proteins containing a characteristic twin-arginine motif in their signal peptide across membranes. Together with TatC, TatB is part of a receptor directly interacting with Tat signal peptides. TatB may form an oligomeric binding site that transiently accommodates folded Tat precursor proteins before their translocation. The polypeptide is Sec-independent protein translocase protein TatB (Nitrosomonas europaea (strain ATCC 19718 / CIP 103999 / KCTC 2705 / NBRC 14298)).